Consider the following 618-residue polypeptide: Very-long-chain aldehyde decarbonylase GL1-3 (618 aa).

A run of 7 helical transmembrane segments spans residues 9–29 (LSSW…GPVV), 46–66 (TSWC…MLFF), 91–111 (MVIM…FPAT), 121–141 (GWAI…YWAH), 174–194 (LESL…FMAG), 289–309 (DFVF…PFAF), and 315–335 (LPFA…GFML). In terms of domain architecture, Fatty acid hydroxylase spans 127 to 267 (VLHVAVSEPA…MPLFDALGGT (141 aa)).

The protein belongs to the sterol desaturase family. In terms of assembly, homodimer. In terms of tissue distribution, expressed in germinating seeds and stamens.

It localises to the endoplasmic reticulum membrane. It catalyses the reaction a long-chain fatty aldehyde + 2 NADPH + O2 + H(+) = a long-chain alkane + formate + 2 NADP(+) + H2O. Functionally, aldehyde decarbonylase involved in the conversion of aldehydes to alkanes. Core component of a very-long-chain alkane synthesis complex. The chain is Very-long-chain aldehyde decarbonylase GL1-3 from Oryza sativa subsp. japonica (Rice).